Here is a 95-residue protein sequence, read N- to C-terminus: Aspartyl/glutamyl-tRNA(Asn/Gln) amidotransferase subunit C (95 aa).

Belongs to the GatC family. As to quaternary structure, heterotrimer of A, B and C subunits.

It carries out the reaction L-glutamyl-tRNA(Gln) + L-glutamine + ATP + H2O = L-glutaminyl-tRNA(Gln) + L-glutamate + ADP + phosphate + H(+). The catalysed reaction is L-aspartyl-tRNA(Asn) + L-glutamine + ATP + H2O = L-asparaginyl-tRNA(Asn) + L-glutamate + ADP + phosphate + 2 H(+). Allows the formation of correctly charged Asn-tRNA(Asn) or Gln-tRNA(Gln) through the transamidation of misacylated Asp-tRNA(Asn) or Glu-tRNA(Gln) in organisms which lack either or both of asparaginyl-tRNA or glutaminyl-tRNA synthetases. The reaction takes place in the presence of glutamine and ATP through an activated phospho-Asp-tRNA(Asn) or phospho-Glu-tRNA(Gln). The protein is Aspartyl/glutamyl-tRNA(Asn/Gln) amidotransferase subunit C of Methylobacterium sp. (strain 4-46).